The following is a 385-amino-acid chain: Di-N-acetylchitobiase (385 aa).

Positions 1–38 (MSRPQLRRWRLVSSPPSGVPGLALLALLALLALRLAAG) are cleaved as a signal peptide. The region spanning 39–385 (TDCPCPEPEL…EVLKPKLLQR (347 aa)) is the GH18 domain. The active-site Proton donor is the E143. 4 N-linked (GlcNAc...) asparagine glycosylation sites follow: N193, N228, N262, and N299.

It belongs to the glycosyl hydrolase 18 family.

It is found in the lysosome. Involved in the degradation of asparagine-linked glycoproteins. Hydrolyze of N-acetyl-beta-D-glucosamine (1-4)N-acetylglucosamine chitobiose core from the reducing end of the bond, it requires prior cleavage by glycosylasparaginase. The protein is Di-N-acetylchitobiase (CTBS) of Homo sapiens (Human).